We begin with the raw amino-acid sequence, 518 residues long: Lysine--tRNA ligase (518 aa).

The disordered stretch occupies residues 1 to 28 (MTEPTQPNAAQPDAARPNVAPEMDDNKI). Mg(2+) is bound by residues E428 and E435.

Belongs to the class-II aminoacyl-tRNA synthetase family. As to quaternary structure, homodimer. Mg(2+) is required as a cofactor.

The protein localises to the cytoplasm. It catalyses the reaction tRNA(Lys) + L-lysine + ATP = L-lysyl-tRNA(Lys) + AMP + diphosphate. This chain is Lysine--tRNA ligase, found in Paraburkholderia phytofirmans (strain DSM 17436 / LMG 22146 / PsJN) (Burkholderia phytofirmans).